A 216-amino-acid polypeptide reads, in one-letter code: 4-hydroxy-tetrahydrodipicolinate reductase (216 aa).

NAD(+) is bound by residues 7 to 12, 71 to 73, and 95 to 98; these read GYSGRM, GTT, and AYNF. Catalysis depends on His-127, which acts as the Proton donor/acceptor. His-128 lines the (S)-2,3,4,5-tetrahydrodipicolinate pocket. Lys-131 acts as the Proton donor in catalysis. 137–138 serves as a coordination point for (S)-2,3,4,5-tetrahydrodipicolinate; sequence GT.

This sequence belongs to the DapB family.

The protein resides in the cytoplasm. The catalysed reaction is (S)-2,3,4,5-tetrahydrodipicolinate + NAD(+) + H2O = (2S,4S)-4-hydroxy-2,3,4,5-tetrahydrodipicolinate + NADH + H(+). It catalyses the reaction (S)-2,3,4,5-tetrahydrodipicolinate + NADP(+) + H2O = (2S,4S)-4-hydroxy-2,3,4,5-tetrahydrodipicolinate + NADPH + H(+). It functions in the pathway amino-acid biosynthesis; L-lysine biosynthesis via DAP pathway; (S)-tetrahydrodipicolinate from L-aspartate: step 4/4. Catalyzes the conversion of 4-hydroxy-tetrahydrodipicolinate (HTPA) to tetrahydrodipicolinate. The protein is 4-hydroxy-tetrahydrodipicolinate reductase of Thermotoga sp. (strain RQ2).